We begin with the raw amino-acid sequence, 232 residues long: Izumo sperm-egg fusion protein 4 (232 aa).

A signal peptide spans 1-15 (MALLLCLVCLTAALA). 2 N-linked (GlcNAc...) asparagine glycosylation sites follow: Asn24 and Asn219.

It belongs to the Izumo family. Detected in sperm.

Its subcellular location is the secreted. The sequence is that of Izumo sperm-egg fusion protein 4 (IZUMO4) from Homo sapiens (Human).